The chain runs to 353 residues: 2-Hydroxyacid oxidase 2 (353 aa).

The FMN hydroxy acid dehydrogenase domain occupies 2-353 (PLVCLADFKA…SPDLIQFSRL (352 aa)). FMN contacts are provided by residues 77 to 79 (PTA), serine 106, and glutamine 128. Residue tyrosine 130 coordinates a 2-oxocarboxylate. Serine 133 carries the phosphoserine modification. FMN is bound at residue threonine 156. Arginine 165 provides a ligand contact to a 2-oxocarboxylate. Residue lysine 224 participates in FMN binding. Histidine 248 (proton acceptor) is an active-site residue. Arginine 251 provides a ligand contact to a 2-oxocarboxylate. FMN contacts are provided by residues 279 to 283 (DGGVR) and 302 to 303 (GR). The Microbody targeting signal signature appears at 351 to 353 (SRL).

Belongs to the FMN-dependent alpha-hydroxy acid dehydrogenase family. Homotetramer. Could also form homooctamer. Requires FMN as cofactor. In terms of tissue distribution, expressed in kidney.

The protein resides in the peroxisome. The catalysed reaction is a (2S)-2-hydroxycarboxylate + O2 = a 2-oxocarboxylate + H2O2. It catalyses the reaction 2-hydroxyoctanoate + O2 = 2-oxooctanoate + H2O2. It carries out the reaction 2-hydroxyhexadecanoate + O2 = 2-oxohexadecanoate + H2O2. The enzyme catalyses 2-hydroxyhexanoate + O2 = 2-oxohexanoate + H2O2. The catalysed reaction is mandelate + O2 = phenylglyoxylate + H2O2. Its activity is regulated as follows. Is inhibited in vitro by CCPST (4-carboxy-5-(4-chlorophenyl)sulfanyl-1,2,3-thiadiazole). Its function is as follows. Oxidase that catalyzes the oxidation of medium and long chain hydroxyacids such as 2-hydroxyhexadecanoate, 2-hydroxyoctanoate, 2-hydroxyhexanoate and 2-hydroxybutanoate, to the correspondong 2-oxoacids. Its role in the oxidation of 2-hydroxy fatty acids may contribute to the general pathway of fatty acid alpha-oxidation. Can also use mandelate as substrate. Active in vitro with the artificial electron acceptor 2,6-dichlorophenolindophenol (DCIP), but O2 is believed to be the physiological electron acceptor, leading to the production of H2O2. The chain is 2-Hydroxyacid oxidase 2 (Hao2) from Rattus norvegicus (Rat).